Reading from the N-terminus, the 553-residue chain is Protein PNS1 (553 aa).

The disordered stretch occupies residues 1 to 53 (MFGEGNKPTEPVPAYDAGQDPFQGPNASKNQYQGSAADYNGAPPPPASQPGNQ). At 1-94 (MFGEGNKPTE…EDSKPKWNDW (94 aa)) the chain is on the cytoplasmic side. Polar residues predominate over residues 25–34 (PNASKNQYQG). The chain crosses the membrane as a helical span at residues 95 to 115 (PFTIFFAGCVIAFIVVAAITL). Over 116–142 (RAWSQNSSSQGSGVYDGANTGTLTTNS) the chain is Extracellular. N-linked (GlcNAc...) asparagine glycosylation occurs at Asn-121. Residues 143-163 (AIMLAISCIIAFVFSIIGIVL) traverse the membrane as a helical segment. Over 164-169 (ARMFPK) the chain is Cytoplasmic. A helical membrane pass occupies residues 170–190 (FFIIAGILFNIIAGLATAIMY). The Extracellular segment spans residues 191 to 192 (LS). Residues 193–213 (LKYYSAGIVFLVFTAICALFY) traverse the membrane as a helical segment. Topologically, residues 214-241 (WRMRHRIPFTVAVLKTVMDVMKSYPQTW) are cytoplasmic. The chain crosses the membrane as a helical span at residues 242 to 262 (FVTLIGSIIATAFSILFSAVI). Residues 263 to 287 (VATYMKYDDKANNPGCSTNGGSCSN) lie on the Extracellular side of the membrane. The chain crosses the membrane as a helical span at residues 288–308 (AKLIGLLVLVFFCGYYIAEVI). The Cytoplasmic segment spans residues 309–349 (RNVIHCTVSGIFGAWYYFSKSDQGMPKWPGFGALKRSLTYS). Residues 350–370 (FGSICFGSLIVTIIETLKAVL) traverse the membrane as a helical segment. Residues 371-385 (RLAVDGVMGGGGADN) are Extracellular-facing. Residues 386 to 406 (GWMQCLALIANWIFSFLEWLA) form a helical membrane-spanning segment. Over 407–450 (RYFNHYAYVFIALYGKPYLRAAKETWYMLREKGIDALINDNLVN) the chain is Cytoplasmic. The helical transmembrane segment at 451-471 (VALSFFTLFTCYITTLFAYLY) threads the bilayer. The Extracellular segment spans residues 472–484 (LRYTDPNYNDNNN). The chain crosses the membrane as a helical span at residues 485–505 (FTPALMAFAFVIAMEICNVIT). Over 506–553 (ETIRSGTATFFVALGNDPEVFHLSYPERFDEIFRAYPEVLKKLSHQNV) the chain is Cytoplasmic.

The protein belongs to the CTL (choline transporter-like) family.

The protein localises to the cell membrane. Its function is as follows. Probably involved in transport through the plasma membrane. The chain is Protein PNS1 (PNS1) from Kluyveromyces lactis (strain ATCC 8585 / CBS 2359 / DSM 70799 / NBRC 1267 / NRRL Y-1140 / WM37) (Yeast).